A 353-amino-acid polypeptide reads, in one-letter code: MIYKFRKVNPITWKNDHVVLIDQTCLPEEYKTVEISSYEEMAVAIKTMIVRGAPAIGVSVAYGMYLGARETVTNDRNEFLKQLEEIAVIFRRTRPTAVNLFWAIERILKVANKTNGTVKEIQEAVLETAKKIHQEDLETCKNIGDRAVEILPTKPEKLNILTHCNAGALATAGYGTALGVIRSAWRDGRLGKVYADETRPRLQGAKLTTWECVQENIPVTLISDNMAAHCMKQGLIHAVVVGADRIAANGDTANKIGTYSLAIVSQAHNIPLYVAAPLSTIDFKISDGSEIPIEERDTKEIYQVGETRICPKQVEFYNPAFDVTPAELITGIMTEHGTVLPGELEQFRVKQLV.

Substrate-binding positions include 51-53 (RGA), Arg-94, and Gln-203. Residue Asp-244 is the Proton donor of the active site. 254–255 (NK) is a substrate binding site.

The protein belongs to the eIF-2B alpha/beta/delta subunits family. MtnA subfamily.

The catalysed reaction is 5-(methylsulfanyl)-alpha-D-ribose 1-phosphate = 5-(methylsulfanyl)-D-ribulose 1-phosphate. Its pathway is amino-acid biosynthesis; L-methionine biosynthesis via salvage pathway; L-methionine from S-methyl-5-thio-alpha-D-ribose 1-phosphate: step 1/6. In terms of biological role, catalyzes the interconversion of methylthioribose-1-phosphate (MTR-1-P) into methylthioribulose-1-phosphate (MTRu-1-P). This Trichodesmium erythraeum (strain IMS101) protein is Methylthioribose-1-phosphate isomerase.